The following is a 168-amino-acid chain: Large ribosomal subunit protein uL10 (168 aa).

It belongs to the universal ribosomal protein uL10 family. In terms of assembly, part of the ribosomal stalk of the 50S ribosomal subunit. The N-terminus interacts with L11 and the large rRNA to form the base of the stalk. The C-terminus forms an elongated spine to which L12 dimers bind in a sequential fashion forming a multimeric L10(L12)X complex.

Functionally, forms part of the ribosomal stalk, playing a central role in the interaction of the ribosome with GTP-bound translation factors. The protein is Large ribosomal subunit protein uL10 of Clostridioides difficile (strain 630) (Peptoclostridium difficile).